Reading from the N-terminus, the 376-residue chain is Ribosomal RNA large subunit methyltransferase G (376 aa).

Belongs to the methyltransferase superfamily. RlmG family.

The protein localises to the cytoplasm. It carries out the reaction guanosine(1835) in 23S rRNA + S-adenosyl-L-methionine = N(2)-methylguanosine(1835) in 23S rRNA + S-adenosyl-L-homocysteine + H(+). Specifically methylates the guanine in position 1835 (m2G1835) of 23S rRNA. In Cronobacter sakazakii (strain ATCC BAA-894) (Enterobacter sakazakii), this protein is Ribosomal RNA large subunit methyltransferase G.